The sequence spans 231 residues: Putative cobalt transport protein CbiM 2 (231 aa).

6 consecutive transmembrane segments (helical) span residues 8-28, 41-61, 75-95, 108-128, 136-156, and 176-196; these read LPIG…IYGI, VLPL…LKIP, LSAA…VLLF, LGAN…LVFV, VGIG…TYTV, and IAFA…EGII.

It belongs to the CbiM family. As to quaternary structure, forms an energy-coupling factor (ECF) transporter complex composed of an ATP-binding protein (A component, CbiO), a transmembrane protein (T component, CbiQ) and 2 possible substrate-capture proteins (S components, CbiM and CbiN) of unknown stoichimetry.

It localises to the cell membrane. Its pathway is cofactor biosynthesis; adenosylcobalamin biosynthesis. Its function is as follows. Part of the energy-coupling factor (ECF) transporter complex CbiMNOQ involved in cobalt import. In Methanocorpusculum labreanum (strain ATCC 43576 / DSM 4855 / Z), this protein is Putative cobalt transport protein CbiM 2.